The chain runs to 289 residues: Bis(5'-nucleosyl)-tetraphosphatase, symmetrical (289 aa).

This sequence belongs to the Ap4A hydrolase family.

The enzyme catalyses P(1),P(4)-bis(5'-adenosyl) tetraphosphate + H2O = 2 ADP + 2 H(+). Functionally, hydrolyzes diadenosine 5',5'''-P1,P4-tetraphosphate to yield ADP. This is Bis(5'-nucleosyl)-tetraphosphatase, symmetrical from Pseudomonas fluorescens (strain ATCC BAA-477 / NRRL B-23932 / Pf-5).